The primary structure comprises 180 residues: Probable cobalt-precorrin-6B C(15)-methyltransferase (decarboxylating) (180 aa).

S-adenosyl-L-methionine-binding positions include threonine 16, 40–44 (GCGSG), aspartate 61, and alanine 89.

The protein belongs to the methyltransferase superfamily. Archaeal-type CbiT family.

It catalyses the reaction Co-precorrin-6B + S-adenosyl-L-methionine = Co-precorrin-7 + S-adenosyl-L-homocysteine + CO2. It functions in the pathway cofactor biosynthesis; adenosylcobalamin biosynthesis; cob(II)yrinate a,c-diamide from sirohydrochlorin (anaerobic route): step 8/10. Its function is as follows. Catalyzes the methylation of C-15 in cobalt-precorrin-6B followed by the decarboxylation of C-12 to form cobalt-precorrin-7. This is Probable cobalt-precorrin-6B C(15)-methyltransferase (decarboxylating) from Methanococcus vannielii (strain ATCC 35089 / DSM 1224 / JCM 13029 / OCM 148 / SB).